We begin with the raw amino-acid sequence, 138 residues long: Small ribosomal subunit protein uS11c (138 aa).

The protein belongs to the universal ribosomal protein uS11 family. In terms of assembly, part of the 30S ribosomal subunit.

Its subcellular location is the plastid. It is found in the chloroplast. In Morus indica (Mulberry), this protein is Small ribosomal subunit protein uS11c.